The chain runs to 320 residues: GTPase Era (320 aa).

One can recognise an Era-type G domain in the interval 25–193 (HCGFIAIVGR…RKHVRDHLPK (169 aa)). A G1 region spans residues 33 to 40 (GRPNVGKS). 33 to 40 (GRPNVGKS) is a binding site for GTP. The tract at residues 59 to 63 (QTTRH) is G2. Residues 80–83 (DTPG) form a G3 region. GTP is bound by residues 80 to 84 (DTPGL) and 142 to 145 (NKVD). Positions 142-145 (NKVD) are G4. The interval 172 to 174 (ISA) is G5. The 87-residue stretch at 216 to 302 (VREKLMRFTG…YLETWVKVKS (87 aa)) folds into the KH type-2 domain.

It belongs to the TRAFAC class TrmE-Era-EngA-EngB-Septin-like GTPase superfamily. Era GTPase family. In terms of assembly, monomer.

It is found in the cytoplasm. The protein localises to the cell inner membrane. In terms of biological role, an essential GTPase that binds both GDP and GTP, with rapid nucleotide exchange. Plays a role in 16S rRNA processing and 30S ribosomal subunit biogenesis and possibly also in cell cycle regulation and energy metabolism. The protein is GTPase Era of Vibrio vulnificus (strain CMCP6).